Consider the following 235-residue polypeptide: Probable Ni/Fe-hydrogenase 1 B-type cytochrome subunit (235 aa).

The Cytoplasmic portion of the chain corresponds to 1–19 (MQQKSDNVVSHYVFEAPVR). A helical membrane pass occupies residues 20-40 (IWHWLTVLCMAVLMVTGYFIG). Topologically, residues 41 to 63 (KPLPSVSGEATYLFYMGYIRLIH) are periplasmic. The helical transmembrane segment at 64 to 84 (FSAGMVFTVVLLMRIYWAFVG) threads the bilayer. Topologically, residues 85–130 (NRYSRELFIVPVWRKSWWQGVWYEIRWYLFLAKRPSADIGHNPIAQ) are cytoplasmic. Residues 131 to 151 (AAMFGYFLMSVFMIITGFALY) traverse the membrane as a helical segment. At 152–185 (SEHSQYAIFAPFRYVVEFFYWTGGNSMDIHSWHR) the chain is on the periplasmic side. A helical membrane pass occupies residues 186 to 203 (LGMWLIGAFVIGHVYMAL). The Cytoplasmic portion of the chain corresponds to 204–235 (REDIMSDDTVISTMVNGYRSHKFGKISNKERS).

Belongs to the HupC/HyaC/HydC family.

The protein localises to the cell inner membrane. Functionally, probable b-type cytochrome. This chain is Probable Ni/Fe-hydrogenase 1 B-type cytochrome subunit (hyaC), found in Escherichia coli O157:H7.